Here is a 1075-residue protein sequence, read N- to C-terminus: Putative type I restriction enzyme MjaVIIP endonuclease subunit (1075 aa).

It belongs to the HsdR family. The type I restriction/modification system is composed of three polypeptides R, M and S.

The catalysed reaction is Endonucleolytic cleavage of DNA to give random double-stranded fragments with terminal 5'-phosphates, ATP is simultaneously hydrolyzed.. Functionally, the restriction (R) subunit of a type I restriction enzyme that recognizes 5'-CAAN(7)TGG-3' and cleaves a random distance away. The R subunit is required for both endonuclease and ATPase activities but not for modification. After locating a non-methylated recognition site, the enzyme complex serves as a molecular motor that translocates DNA in an ATP-dependent manner until a collision occurs that triggers cleavage. In Methanocaldococcus jannaschii (strain ATCC 43067 / DSM 2661 / JAL-1 / JCM 10045 / NBRC 100440) (Methanococcus jannaschii), this protein is Putative type I restriction enzyme MjaVIIP endonuclease subunit.